The primary structure comprises 908 residues: UPF0182 protein NT01CX_0852 (908 aa).

7 consecutive transmembrane segments (helical) span residues isoleucine 8 to isoleucine 28, phenylalanine 47 to threonine 67, isoleucine 96 to tyrosine 116, leucine 157 to isoleucine 177, leucine 209 to tryptophan 229, phenylalanine 253 to leucine 273, and isoleucine 280 to alanine 300.

The protein belongs to the UPF0182 family.

Its subcellular location is the cell membrane. The protein is UPF0182 protein NT01CX_0852 of Clostridium novyi (strain NT).